Consider the following 141-residue polypeptide: Protein KRTCAP2 homolog (141 aa).

Helical transmembrane passes span 11–31 (VVSS…LRFC), 42–62 (VLLG…CVSN), 74–94 (AKLL…AGLV), and 97–117 (VCAT…NRIS).

It belongs to the KRTCAP2 family. As to quaternary structure, component of the oligosaccharyltransferase (OST) complex.

Its subcellular location is the membrane. Its function is as follows. Subunit of the oligosaccharyl transferase (OST) complex that catalyzes the initial transfer of a defined glycan (Glc(3)Man(9)GlcNAc(2) in eukaryotes) from the lipid carrier dolichol-pyrophosphate to an asparagine residue within an Asn-X-Ser/Thr consensus motif in nascent polypeptide chains, the first step in protein N-glycosylation. N-glycosylation occurs cotranslationally and the complex associates with the Sec61 complex at the channel-forming translocon complex that mediates protein translocation across the endoplasmic reticulum (ER). All subunits are required for a maximal enzyme activity. The protein is Protein KRTCAP2 homolog of Drosophila melanogaster (Fruit fly).